Reading from the N-terminus, the 534-residue chain is MLNKSFAMYVYVQQFHRDMPPTPVFVYGQSLQTATFPGPTIVARYNVPLYVTWENHLPDAHILPWDPTVPTAIPKNGGVPTVVHLHGAAQAPDSDGHAFAWFTRDFAENGSTWTQKTYTYPNVQPAAGNIWYHDHALGLTRASLLAGLLAAYIVEWPELEMPFNLPSGEFDLHLVIADRKFNVDGTIFMDTVGAVPSVHPQWQPEYFGEVITVNGKAWPFQAVQRRRYRLRILNASNARYLNIRFSNGLPFTVIASDATYLSRPVTVSNLLLSPAEIFDVIVDFSLVVNPNATDIELLNSAPYPFPTGTPANATLDGKVMAFNVSAKWQVGDDMPMQEPENSTVVPEIGVPFAKVTALPPTMKTRYIVLYENMTSNDPNTAKTMNLYINGLRLEDPPTETPISGTTELWHVINLTPDNHPLHLHLAEFQAVQMLQLVDPDTFKSCMLKHNDTFACNLDQHAVGALQPVPEEEKTWKNVVKIPPAYVTSVVVAFRLVHNNMPYPFDATAAPGYVYHCHILDHEDNAMIRPLTLLP.

2 residues coordinate Cu cation: His-84 and His-86. Residue Asn-109 is glycosylated (N-linked (GlcNAc...) asparagine). His-133 and His-135 together coordinate Cu cation. One can recognise a Plastocyanin-like domain in the interval Pro-219–Asn-291. 6 N-linked (GlcNAc...) asparagine glycosylation sites follow: Asn-234, Asn-291, Asn-312, Asn-323, Asn-341, and Asn-372. Cu cation-binding residues include His-419, His-422, and His-424. Asn-450 is a glycosylation site (N-linked (GlcNAc...) asparagine). The Cu cation site is built by His-515, Cys-516, His-517, His-521, and Met-526.

Belongs to the multicopper oxidase family. The cofactor is Cu cation. In terms of tissue distribution, expressed in roots and basal stems.

The protein localises to the endoplasmic reticulum membrane. Its function is as follows. Multicopper oxidase that may play a role in the maintenance of inorganic phosphate homeostasis. This Oryza sativa subsp. japonica (Rice) protein is Multicopper oxidase LPR1 homolog 3.